Here is a 369-residue protein sequence, read N- to C-terminus: tRNA-specific 2-thiouridylase MnmA (369 aa).

ATP is bound by residues 11–18 (GMSGGVDS) and methionine 37. Positions 97-99 (NPD) are interaction with target base in tRNA. Catalysis depends on cysteine 102, which acts as the Nucleophile. The cysteines at positions 102 and 199 are disulfide-linked. Glycine 127 lines the ATP pocket. The tract at residues 149-151 (KDQ) is interaction with tRNA. Cysteine 199 serves as the catalytic Cysteine persulfide intermediate. Residues 311–312 (RY) are interaction with tRNA.

Belongs to the MnmA/TRMU family. In terms of assembly, interacts with TusE.

It localises to the cytoplasm. The catalysed reaction is S-sulfanyl-L-cysteinyl-[protein] + uridine(34) in tRNA + AH2 + ATP = 2-thiouridine(34) in tRNA + L-cysteinyl-[protein] + A + AMP + diphosphate + H(+). In terms of biological role, catalyzes the 2-thiolation of uridine at the wobble position (U34) of tRNA(Lys), tRNA(Glu) and tRNA(Gln), leading to the formation of s(2)U34, the first step of tRNA-mnm(5)s(2)U34 synthesis. Sulfur is provided by IscS, via a sulfur-relay system. Binds ATP and its substrate tRNAs. The chain is tRNA-specific 2-thiouridylase MnmA from Enterobacter sp. (strain 638).